Consider the following 267-residue polypeptide: Probable membrane transporter protein MJ0441 (267 aa).

7 consecutive transmembrane segments (helical) span residues 10 to 30 (LLLLPLLIIVGFIVGILGSLF), 31 to 51 (GIGGGFLVAPILTFIFDYFGI), 55 to 75 (VKFAVGTSLFVVFINSIISIF), 87 to 107 (ASITIGIISLVFSYFSGFLVV), 158 to 178 (FLSGLFGIGGGIVIIPILAMA), 185 to 205 (AVAISVGVIPLTSIGGLISYL), and 213 to 233 (IYNIGYVSIPIALIMAIPIIY).

This sequence belongs to the 4-toluene sulfonate uptake permease (TSUP) (TC 2.A.102) family.

Its subcellular location is the cell membrane. The sequence is that of Probable membrane transporter protein MJ0441 from Methanocaldococcus jannaschii (strain ATCC 43067 / DSM 2661 / JAL-1 / JCM 10045 / NBRC 100440) (Methanococcus jannaschii).